A 266-amino-acid chain; its full sequence is GTP cyclohydrolase FolE2 1 (266 aa).

This sequence belongs to the GTP cyclohydrolase IV family.

The catalysed reaction is GTP + H2O = 7,8-dihydroneopterin 3'-triphosphate + formate + H(+). It participates in cofactor biosynthesis; 7,8-dihydroneopterin triphosphate biosynthesis; 7,8-dihydroneopterin triphosphate from GTP: step 1/1. Converts GTP to 7,8-dihydroneopterin triphosphate. This chain is GTP cyclohydrolase FolE2 1, found in Dechloromonas aromatica (strain RCB).